Here is a 165-residue protein sequence, read N- to C-terminus: ER membrane protein complex subunit 5 (165 aa).

Over 1 to 3 the chain is Cytoplasmic; the sequence is MAP. Residues 4-22 traverse the membrane as a helical segment; that stretch reads SLWKGLVGIGLFALAHAAF. At 23–77 the chain is on the lumenal side; that stretch reads SAAQHYFPSSGIKWKRKCEFLQSSSFQDKIFRSMYYVYDRSYMRLTEKEDESLPI. The chain crosses the membrane as a helical span at residues 78-97; the sequence is DIVLQTLLAFAVTCYGIVHI. Over 98–165 the chain is Cytoplasmic; that stretch reads AGEFKDMDAT…KLRKLESLRR (68 aa). A Phosphoserine modification is found at serine 154.

It belongs to the membrane magnesium transporter (TC 1.A.67) family. As to quaternary structure, component of the ER membrane protein complex (EMC).

It localises to the endoplasmic reticulum membrane. The protein resides in the golgi apparatus membrane. Its subcellular location is the early endosome membrane. In terms of biological role, part of the endoplasmic reticulum membrane protein complex (EMC) that enables the energy-independent insertion into endoplasmic reticulum membranes of newly synthesized membrane proteins. Preferentially accommodates proteins with transmembrane domains that are weakly hydrophobic or contain destabilizing features such as charged and aromatic residues. Involved in the cotranslational insertion of multi-pass membrane proteins in which stop-transfer membrane-anchor sequences become ER membrane spanning helices. It is also required for the post-translational insertion of tail-anchored/TA proteins in endoplasmic reticulum membranes. By mediating the proper cotranslational insertion of N-terminal transmembrane domains in an N-exo topology, with translocated N-terminus in the lumen of the ER, controls the topology of multi-pass membrane proteins like the G protein-coupled receptors. By regulating the insertion of various proteins in membranes, it is indirectly involved in many cellular processes. May be involved in Mg(2+) transport. This chain is ER membrane protein complex subunit 5, found in Bos taurus (Bovine).